We begin with the raw amino-acid sequence, 89 residues long: Cell division topological specificity factor (89 aa).

Belongs to the MinE family.

Its function is as follows. Prevents the cell division inhibition by proteins MinC and MinD at internal division sites while permitting inhibition at polar sites. This ensures cell division at the proper site by restricting the formation of a division septum at the midpoint of the long axis of the cell. This chain is Cell division topological specificity factor, found in Heliobacterium modesticaldum (strain ATCC 51547 / Ice1).